A 299-amino-acid chain; its full sequence is Coenzyme PQQ synthesis protein B (299 aa).

Belongs to the PqqB family.

It participates in cofactor biosynthesis; pyrroloquinoline quinone biosynthesis. In terms of biological role, may be involved in the transport of PQQ or its precursor to the periplasm. The sequence is that of Coenzyme PQQ synthesis protein B from Xanthomonas campestris pv. campestris (strain 8004).